The sequence spans 276 residues: UPF0328 protein ECU08_2080 (276 aa).

The interval 1–24 is disordered; sequence MGIIDVQRSHLTATPSKERDAPAH.

It belongs to the UPF0328 family.

This chain is UPF0328 protein ECU08_2080, found in Encephalitozoon cuniculi (strain GB-M1) (Microsporidian parasite).